A 181-amino-acid chain; its full sequence is UPF0215 protein AF_1433 (181 aa).

The protein belongs to the UPF0215 family.

This is UPF0215 protein AF_1433 from Archaeoglobus fulgidus (strain ATCC 49558 / DSM 4304 / JCM 9628 / NBRC 100126 / VC-16).